The sequence spans 363 residues: Aminomethyltransferase (363 aa).

It belongs to the GcvT family. As to quaternary structure, the glycine cleavage system is composed of four proteins: P, T, L and H.

It catalyses the reaction N(6)-[(R)-S(8)-aminomethyldihydrolipoyl]-L-lysyl-[protein] + (6S)-5,6,7,8-tetrahydrofolate = N(6)-[(R)-dihydrolipoyl]-L-lysyl-[protein] + (6R)-5,10-methylene-5,6,7,8-tetrahydrofolate + NH4(+). Its function is as follows. The glycine cleavage system catalyzes the degradation of glycine. This Thermosipho melanesiensis (strain DSM 12029 / CIP 104789 / BI429) protein is Aminomethyltransferase.